The sequence spans 258 residues: Maintenance of carboxysome distribution protein A (258 aa).

The ATP site is built by G11, G12, Q13, G14, K15, T16, T17, Q40, E147, K151, F182, R183, L216, E217, S218, and Y221. T16 serves as a coordination point for Mg(2+).

It belongs to the ParA family. McdA subfamily. As to quaternary structure, homodimerizes in the presence of ATP, making extra nucleotide contacts than with ADP or AMP-PNP. Each subunit binds 1 ATP molecule; Glu-147, Lys-151 and Arg-183 cross the dimer interface to contact ATP in the other subunit, while Phe-182, Arg-183 and Tyr-221 stack with the adenine base in their own subunit. Forms a complex with McdB.

Its subcellular location is the cytoplasm. It is found in the nucleoid. It catalyses the reaction ATP + H2O = ADP + phosphate + H(+). In terms of biological role, mcdA and McdB together mediate carboxysome (Cb) spacing, size, ultrastructure and probably inheritance in the cell, together they prevent Cb aggregation. McdA is an ATPase that forms dynamic gradients on the nucleoid in response to adapter protein McdB, which associates with carboxysomes. The interplay between McdA gradients on the nucleoid and McdB-bound carboxysomes result in the equal spacing of Cbs along the cell length. Binds DNA saturably and strongly in the presence of Mg(2+)ATP; without ATP, DNA-binding is very poor (tested with a mutant that should not be able to hydrolyze ATP, Asp-38-Ala). Decreasing the NaCl concentration increases DNA binding. Its function is as follows. Incorrect positioning (aggregation) of carboxysomes results in reduced CO(2) fixation by encapsulated ribulose-1,5-bisphosphate carboxylase (RuBisCO, cbbL/cbbS), which leads to slower growth. The protein is Maintenance of carboxysome distribution protein A of Gloeothece citriformis (strain PCC 7424) (Cyanothece sp. (strain PCC 7424)).